The chain runs to 397 residues: L-cysteine desulfidase (397 aa).

Catalysis depends on Cys-23, which acts as the Proton acceptor. Cys-288, Cys-330, and Cys-337 together coordinate [4Fe-4S] cluster.

The protein belongs to the L-cysteine desulfidase family. Homotrimer. [4Fe-4S] cluster is required as a cofactor.

The catalysed reaction is L-cysteine + H2O = hydrogen sulfide + pyruvate + NH4(+) + H(+). Functionally, catalyzes the cleavage of L-cysteine to form 2-aminoprop-2-enoate and sulfide. The former then spontaneously hydrolyzes to pyruvate and NH(3). May be responsible for the production of sulfide required for the biosynthesis of iron-sulfur centers in this archaea. The protein is L-cysteine desulfidase of Methanococcus maripaludis (strain C7 / ATCC BAA-1331).